Here is a 495-residue protein sequence, read N- to C-terminus: UDP-glycosyltransferase 73C12 (495 aa).

H24 acts as the Proton acceptor in catalysis. An an anthocyanidin-binding site is contributed by H24. The active-site Charge relay is D129. Positions 356, 358, 373, 376, 377, 378, and 381 each coordinate UDP-alpha-D-glucose. A396 provides a ligand contact to an anthocyanidin. Positions 397 and 398 each coordinate UDP-alpha-D-glucose.

Belongs to the UDP-glycosyltransferase family.

It catalyses the reaction oleanolate + UDP-alpha-D-glucose = oleanolate 3-O-beta-D-glucoside + UDP + H(+). Catalyzes the transfer of a glucose (Glc) moiety from UDP-Glc to the C-3 position of the oleanane sapogenins oleanolate and hederagenin, and to the C-28 carboxylic group of the lupane sapogenin betulinate. The monoglucosylated hederagenin 3-O-beta-D-glucoside is a feeding deterrent of the yellow-striped flea beetle (Phyllotreta nemorum). The chain is UDP-glycosyltransferase 73C12 from Barbarea vulgaris (Yellow rocket).